The following is a 185-amino-acid chain: Probable calcium-binding protein CML10 (185 aa).

The segment at 1-41 (MVKIKMPALFRRRSGSKSPPLPQADPASGGGSPAPTPEEEM) is disordered. EF-hand domains are found at residues 36 to 71 (TPEE…LGHA), 72 to 107 (ATDD…ASGD), 110 to 145 (AVEE…LGEK), and 146 to 181 (ATVQ…GGSF). D49, N51, D53, R55, E60, D85, D87, D89, E96, D123, D125, N127, T129, E134, D159, N161, D163, and E170 together coordinate Ca(2+).

Functionally, potential calcium sensor. The protein is Probable calcium-binding protein CML10 (CML10) of Oryza sativa subsp. japonica (Rice).